Reading from the N-terminus, the 675-residue chain is Vitamin K-dependent protein S (675 aa).

The N-terminal stretch at Met-1–Thr-24 is a signal peptide. The propeptide occupies Asn-25–Arg-41. The region spanning Ala-42–Gly-87 is the Gla domain. Glu-47, Glu-48, Glu-55, Glu-57, Glu-60, Glu-61, Glu-66, Glu-67, Glu-70, Glu-73, and Glu-77 each carry 4-carboxyglutamate. An intrachain disulfide couples Cys-58 to Cys-63. The tract at residues Cys-88–Ala-116 is thrombin-sensitive. Positions Ile-117–Gln-155 constitute an EGF-like 1 domain. Disulfide bonds link Cys-121/Cys-134, Cys-126/Cys-143, Cys-145/Cys-154, Cys-161/Cys-175, Cys-171/Cys-184, Cys-186/Cys-199, Cys-205/Cys-217, Cys-212/Cys-226, Cys-228/Cys-241, Cys-247/Cys-256, Cys-252/Cys-265, Cys-267/Cys-282, and Cys-449/Cys-475. Position 136 is a (3R)-3-hydroxyaspartate (Asp-136). The EGF-like 2; calcium-binding domain occupies Asp-157–Lys-200. The EGF-like 3; calcium-binding domain maps to Asp-201–Lys-242. The region spanning Asp-243 to Glu-283 is the EGF-like 4; calcium-binding domain. 2 Laminin G-like domains span residues Leu-299 to Cys-475 and Tyr-484 to Cys-665. N-linked (GlcNAc...) asparagine glycans are attached at residues Asn-499 and Asn-509. A disulfide bond links Cys-638 and Cys-665.

In terms of processing, the iron and 2-oxoglutarate dependent 3-hydroxylation of aspartate and asparagine is (R) stereospecific within EGF domains. Plasma.

It is found in the secreted. Anticoagulant plasma protein; it is a cofactor to activated protein C in the degradation of coagulation factors Va and VIIIa. It helps to prevent coagulation and stimulating fibrinolysis. In Mus musculus (Mouse), this protein is Vitamin K-dependent protein S (Pros1).